Consider the following 133-residue polypeptide: uncharacterized protein (133 aa).

This is an uncharacterized protein from Enterobacteria phage T4 (Bacteriophage T4).